The sequence spans 488 residues: Germacrene A acid 8-beta-hydroxylase (488 aa).

Residues 2-22 traverse the membrane as a helical; Signal-anchor for type II membrane protein segment; that stretch reads ELFTIFSIVVSSLILFTFWSL. An N-linked (GlcNAc...) asparagine glycan is attached at Asn-407. Cys-429 is a heme binding site.

Belongs to the cytochrome P450 family. Requires heme as cofactor. Expressed in leaf primordia.

The protein resides in the membrane. It catalyses the reaction germacra-1(10),4,11(13)-trien-12-oate + reduced [NADPH--hemoprotein reductase] + O2 = 8beta-hydroxygermacra-1(10),4,11(13)-trien-12-oate + oxidized [NADPH--hemoprotein reductase] + H2O + H(+). It functions in the pathway secondary metabolite biosynthesis; terpenoid biosynthesis. In terms of biological role, involved in the biosynthesis of germacrene-derived sesquiterpene lactones. Hydroxylates germacrene A acid to 8-beta-hydroxy-germacrene A acid. Unlike 6-alpha-hydroxy-germacrene A acid, this compound cannot undergo spontaneous lactonization. This chain is Germacrene A acid 8-beta-hydroxylase, found in Helianthus annuus (Common sunflower).